The sequence spans 521 residues: Bifunctional purine biosynthesis protein PurH (521 aa).

Residues 1 to 145 (MIKQALISVS…KNHRDVTVVV (145 aa)) enclose the MGS-like domain.

Belongs to the PurH family.

The enzyme catalyses (6R)-10-formyltetrahydrofolate + 5-amino-1-(5-phospho-beta-D-ribosyl)imidazole-4-carboxamide = 5-formamido-1-(5-phospho-D-ribosyl)imidazole-4-carboxamide + (6S)-5,6,7,8-tetrahydrofolate. It carries out the reaction IMP + H2O = 5-formamido-1-(5-phospho-D-ribosyl)imidazole-4-carboxamide. The protein operates within purine metabolism; IMP biosynthesis via de novo pathway; 5-formamido-1-(5-phospho-D-ribosyl)imidazole-4-carboxamide from 5-amino-1-(5-phospho-D-ribosyl)imidazole-4-carboxamide (10-formyl THF route): step 1/1. It participates in purine metabolism; IMP biosynthesis via de novo pathway; IMP from 5-formamido-1-(5-phospho-D-ribosyl)imidazole-4-carboxamide: step 1/1. The protein is Bifunctional purine biosynthesis protein PurH of Paraburkholderia phytofirmans (strain DSM 17436 / LMG 22146 / PsJN) (Burkholderia phytofirmans).